A 386-amino-acid chain; its full sequence is Transcription factor GTE1 (386 aa).

Disordered regions lie at residues 66 to 106 and 340 to 386; these read GAAQ…KHVS and ANKS…AKKA. The segment covering 68 to 78 has biased composition (polar residues); that stretch reads AQTNTSKSNSG. The Bromo domain maps to 105 to 211; that stretch reads VSSPDLMRQF…EKFEEKWLLI (107 aa). Positions 263-344 constitute an NET domain; the sequence is RESVVQRCRK…EALKAANKSS (82 aa). Residues 345 to 358 show a composition bias toward low complexity; the sequence is GGTNAQNNNNTGTG.

In terms of tissue distribution, barely detectable in stems, leaves, siliques, and dry seeds, but was present at considerable levels in roots, flowers and imbibited seeds.

It is found in the nucleus. Its function is as follows. Transcription activator that plays a role in the promotion of seed germination by both negatively and positively regulating the abscisic acid (ABA) and phytochrome A (phyA) transduction pathways, respectively. The polypeptide is Transcription factor GTE1 (GTE1) (Arabidopsis thaliana (Mouse-ear cress)).